The following is a 231-amino-acid chain: 7-cyano-7-deazaguanine synthase (231 aa).

7–17 contributes to the ATP binding site; the sequence is LSSGLDSVAAL. Zn(2+) is bound by residues C195, C203, C206, and C209.

The protein belongs to the QueC family. The cofactor is Zn(2+).

The enzyme catalyses 7-carboxy-7-deazaguanine + NH4(+) + ATP = 7-cyano-7-deazaguanine + ADP + phosphate + H2O + H(+). The protein operates within purine metabolism; 7-cyano-7-deazaguanine biosynthesis. In terms of biological role, catalyzes the ATP-dependent conversion of 7-carboxy-7-deazaguanine (CDG) to 7-cyano-7-deazaguanine (preQ(0)). The sequence is that of 7-cyano-7-deazaguanine synthase from Methanosarcina mazei (strain ATCC BAA-159 / DSM 3647 / Goe1 / Go1 / JCM 11833 / OCM 88) (Methanosarcina frisia).